The chain runs to 329 residues: UDP-glucose 4-epimerase (329 aa).

Residues 13–14, 33–38, 53–54, 76–80, Asn95, Thr120, Tyr144, Lys148, and Phe172 each bind NAD(+); these read YV, HNLSTG, DI, and FAAFS. Thr120 and Tyr144 together coordinate substrate. Residue Tyr144 is the Proton acceptor of the active site. Substrate-binding positions include Asn173, 190–191, 207–209, Arg221, and 281–284; these read HL, SVY, and RGRD.

The protein belongs to the NAD(P)-dependent epimerase/dehydratase family. As to quaternary structure, homodimer. NAD(+) is required as a cofactor.

It carries out the reaction UDP-alpha-D-glucose = UDP-alpha-D-galactose. It functions in the pathway carbohydrate metabolism; galactose metabolism. Involved in the metabolism of galactose. Catalyzes the conversion of UDP-galactose (UDP-Gal) to UDP-glucose (UDP-Glc) through a mechanism involving the transient reduction of NAD. The sequence is that of UDP-glucose 4-epimerase (galE) from Streptomyces lividans.